A 297-amino-acid polypeptide reads, in one-letter code: Nucleotide-binding protein CJA_2809 (297 aa).

8–15 (GLSGSGKT) contacts ATP. Residue 59 to 62 (DVRN) participates in GTP binding.

It belongs to the RapZ-like family.

Functionally, displays ATPase and GTPase activities. This chain is Nucleotide-binding protein CJA_2809, found in Cellvibrio japonicus (strain Ueda107) (Pseudomonas fluorescens subsp. cellulosa).